Here is a 370-residue protein sequence, read N- to C-terminus: Uroporphyrinogen decarboxylase (370 aa).

Residues 29 to 33 (RQAGR), aspartate 79, tyrosine 155, serine 210, and histidine 342 contribute to the substrate site.

The protein belongs to the uroporphyrinogen decarboxylase family. Homodimer.

The protein localises to the cytoplasm. The enzyme catalyses uroporphyrinogen III + 4 H(+) = coproporphyrinogen III + 4 CO2. It functions in the pathway porphyrin-containing compound metabolism; protoporphyrin-IX biosynthesis; coproporphyrinogen-III from 5-aminolevulinate: step 4/4. Its function is as follows. Catalyzes the decarboxylation of four acetate groups of uroporphyrinogen-III to yield coproporphyrinogen-III. This is Uroporphyrinogen decarboxylase from Acidovorax ebreus (strain TPSY) (Diaphorobacter sp. (strain TPSY)).